We begin with the raw amino-acid sequence, 156 residues long: Small ribosomal subunit protein uS7 (156 aa).

The protein belongs to the universal ribosomal protein uS7 family. In terms of assembly, part of the 30S ribosomal subunit. Contacts proteins S9 and S11.

Functionally, one of the primary rRNA binding proteins, it binds directly to 16S rRNA where it nucleates assembly of the head domain of the 30S subunit. Is located at the subunit interface close to the decoding center, probably blocks exit of the E-site tRNA. This Alkalilimnicola ehrlichii (strain ATCC BAA-1101 / DSM 17681 / MLHE-1) protein is Small ribosomal subunit protein uS7.